The chain runs to 93 residues: Cobalt transport protein CbiN (93 aa).

Transmembrane regions (helical) follow at residues 5-25 (LMLLAMVVALVILPFFINHGG) and 63-83 (LLFTLQGSLGAAVIFYILGYC).

The protein belongs to the CbiN family. In terms of assembly, forms an energy-coupling factor (ECF) transporter complex composed of an ATP-binding protein (A component, CbiO), a transmembrane protein (T component, CbiQ) and 2 possible substrate-capture proteins (S components, CbiM and CbiN) of unknown stoichimetry.

Its subcellular location is the cell inner membrane. It functions in the pathway cofactor biosynthesis; adenosylcobalamin biosynthesis. Its function is as follows. Part of the energy-coupling factor (ECF) transporter complex CbiMNOQ involved in cobalt import. This is Cobalt transport protein CbiN from Salmonella arizonae (strain ATCC BAA-731 / CDC346-86 / RSK2980).